The sequence spans 834 residues: Taste receptor type 1 member 2 (834 aa).

The first 19 residues, 1-19, serve as a signal peptide directing secretion; it reads MGPRARTVCFLFFLLWVLA. Topologically, residues 20-561 are extracellular; sequence ELAENSDFHL…SFLEWHEAAT (542 aa). 7 N-linked (GlcNAc...) asparagine glycosylation sites follow: Asn-84, Asn-292, Asn-312, Asn-363, Asn-423, Asn-482, and Asn-522. A helical transmembrane segment spans residues 562-582; that stretch reads IAVALLAALGFLXXXXXXXXX. Topologically, residues 583 to 597 are cytoplasmic; that stretch reads XXXXXXPMVRSAGGP. Residues 598–618 traverse the membrane as a helical segment; that stretch reads MCFLMLTLLLVAYMVVPVYVG. Over 619–630 the chain is Extracellular; it reads PPKVTTCLCRQA. A helical transmembrane segment spans residues 631–651; it reads LFPVCFTICISCITMRSFQIV. Topologically, residues 652–676 are cytoplasmic; sequence CVFKMASRFPRAYSYWVRYQGSYVS. The helical transmembrane segment at 677–697 threads the bilayer; sequence VAFITALKVVTVVISLLATGL. Residues 698–722 lie on the Extracellular side of the membrane; it reads NPTTRADTDDPKIMIISCNPNYRNS. The helical transmembrane segment at 723–743 threads the bilayer; sequence LLFNTSLDLLLSVVGFSFAYM. At 744–755 the chain is on the cytoplasmic side; the sequence is GKELPTNYNEAK. Residues 756-776 traverse the membrane as a helical segment; sequence FITFSMTFYFTSSVSLCTFMS. Residues 777–779 lie on the Extracellular side of the membrane; the sequence is VYD. A helical transmembrane segment spans residues 780–800; that stretch reads GVLVTIVDLLVTVFNLLAISL. Residues 801-834 lie on the Cytoplasmic side of the membrane; that stretch reads GYFGPKCYMILFYPERNTPAYFNSMIQGYTMRRD.

This sequence belongs to the G-protein coupled receptor 3 family. TAS1R subfamily. In terms of assembly, forms heterodimers with TAS1R3.

It is found in the cell membrane. Its function is as follows. Putative taste receptor. TAS1R2/TAS1R3 recognizes diverse natural and synthetic sweeteners. The sequence is that of Taste receptor type 1 member 2 (TAS1R2) from Cebuella pygmaea (Pygmy marmoset).